The primary structure comprises 150 residues: Endoribonuclease YbeY (150 aa).

Zn(2+)-binding residues include histidine 112, histidine 116, and aspartate 122.

This sequence belongs to the endoribonuclease YbeY family. The cofactor is Zn(2+).

The protein resides in the cytoplasm. Functionally, single strand-specific metallo-endoribonuclease involved in late-stage 70S ribosome quality control and in maturation of the 3' terminus of the 16S rRNA. The protein is Endoribonuclease YbeY of Protochlamydia amoebophila (strain UWE25).